The chain runs to 106 residues: Large ribosomal subunit protein uL24 (106 aa).

Belongs to the universal ribosomal protein uL24 family. In terms of assembly, part of the 50S ribosomal subunit.

Its function is as follows. One of two assembly initiator proteins, it binds directly to the 5'-end of the 23S rRNA, where it nucleates assembly of the 50S subunit. In terms of biological role, one of the proteins that surrounds the polypeptide exit tunnel on the outside of the subunit. The protein is Large ribosomal subunit protein uL24 of Gluconobacter oxydans (strain 621H) (Gluconobacter suboxydans).